The following is a 656-amino-acid chain: UvrABC system protein C (656 aa).

The GIY-YIG domain occupies 41-120; that stretch reads KSSGCYLFKD…IKTNKPYFNI (80 aa). Residues 230–265 enclose the UVR domain; the sequence is DDLEVFLERKMNQYSNDLEFENAAKIRDQISGLKLL.

Belongs to the UvrC family. Interacts with UvrB in an incision complex.

It localises to the cytoplasm. In terms of biological role, the UvrABC repair system catalyzes the recognition and processing of DNA lesions. UvrC both incises the 5' and 3' sides of the lesion. The N-terminal half is responsible for the 3' incision and the C-terminal half is responsible for the 5' incision. This is UvrABC system protein C from Prochlorococcus marinus subsp. pastoris (strain CCMP1986 / NIES-2087 / MED4).